The sequence spans 509 residues: ATP synthase subunit alpha 1 (509 aa).

172–179 (GDRQTGKT) contacts ATP.

Belongs to the ATPase alpha/beta chains family. As to quaternary structure, F-type ATPases have 2 components, CF(1) - the catalytic core - and CF(0) - the membrane proton channel. CF(1) has five subunits: alpha(3), beta(3), gamma(1), delta(1), epsilon(1). CF(0) has four main subunits: a(1), b(1), b'(1) and c(9-12).

Its subcellular location is the cell inner membrane. The catalysed reaction is ATP + H2O + 4 H(+)(in) = ADP + phosphate + 5 H(+)(out). In terms of biological role, produces ATP from ADP in the presence of a proton gradient across the membrane. The alpha chain is a regulatory subunit. In Dinoroseobacter shibae (strain DSM 16493 / NCIMB 14021 / DFL 12), this protein is ATP synthase subunit alpha 1.